Consider the following 414-residue polypeptide: NAC domain-containing protein 35 (414 aa).

Positions M1–E21 are enriched in polar residues. Positions M1–D47 are disordered. Basic and acidic residues predominate over residues K22 to D47. Residues V51 to R198 enclose the NAC domain. The DNA-binding element occupies I149–H204. Positions G200–I251 are disordered. Over residues H233–I251 the composition is skewed to low complexity.

Expressed in aerial organs in early stages of seedling development.

The protein resides in the nucleus. Functionally, transcription factor that acts as a floral repressor. Controls flowering time by negatively regulating CONSTANS (CO) expression in a GIGANTEA (GI)-independent manner. Regulates the plant cold response by positive regulation of the cold response genes COR15A and KIN1. May coordinate cold response and flowering time. This is NAC domain-containing protein 35 from Arabidopsis thaliana (Mouse-ear cress).